The primary structure comprises 350 residues: Putative D-xylulose reductase (350 aa).

Zn(2+) is bound by residues cysteine 43, histidine 68, and glutamate 154.

This sequence belongs to the zinc-containing alcohol dehydrogenase family. It depends on Zn(2+) as a cofactor.

The catalysed reaction is xylitol + NAD(+) = D-xylulose + NADH + H(+). In Agrobacterium fabrum (strain C58 / ATCC 33970) (Agrobacterium tumefaciens (strain C58)), this protein is Putative D-xylulose reductase.